Consider the following 154-residue polypeptide: uncharacterized protein (154 aa).

The protein localises to the mitochondrion. This is an uncharacterized protein from Arabidopsis thaliana (Mouse-ear cress).